The primary structure comprises 475 residues: Aspartyl/glutamyl-tRNA(Asn/Gln) amidotransferase subunit B (475 aa).

This sequence belongs to the GatB/GatE family. GatB subfamily. Heterotrimer of A, B and C subunits.

The enzyme catalyses L-glutamyl-tRNA(Gln) + L-glutamine + ATP + H2O = L-glutaminyl-tRNA(Gln) + L-glutamate + ADP + phosphate + H(+). The catalysed reaction is L-aspartyl-tRNA(Asn) + L-glutamine + ATP + H2O = L-asparaginyl-tRNA(Asn) + L-glutamate + ADP + phosphate + 2 H(+). Its function is as follows. Allows the formation of correctly charged Asn-tRNA(Asn) or Gln-tRNA(Gln) through the transamidation of misacylated Asp-tRNA(Asn) or Glu-tRNA(Gln) in organisms which lack either or both of asparaginyl-tRNA or glutaminyl-tRNA synthetases. The reaction takes place in the presence of glutamine and ATP through an activated phospho-Asp-tRNA(Asn) or phospho-Glu-tRNA(Gln). This Staphylococcus epidermidis (strain ATCC 12228 / FDA PCI 1200) protein is Aspartyl/glutamyl-tRNA(Asn/Gln) amidotransferase subunit B.